A 617-amino-acid polypeptide reads, in one-letter code: V-type proton ATPase catalytic subunit A (617 aa).

An ATP-binding site is contributed by glycine 257–threonine 264.

It belongs to the ATPase alpha/beta chains family. In terms of assembly, V-ATPase is a heteromultimeric enzyme composed of a peripheral catalytic V1 complex (components A to H) attached to an integral membrane V0 proton pore complex (components: a, c, c', c'', d, e, f and VOA1).

It localises to the vacuole membrane. It catalyses the reaction ATP + H2O + 4 H(+)(in) = ADP + phosphate + 5 H(+)(out). Catalytic subunit of the V1 complex of vacuolar(H+)-ATPase (V-ATPase), a multisubunit enzyme composed of a peripheral complex (V1) that hydrolyzes ATP and a membrane integral complex (V0) that translocates protons. V-ATPase is responsible for acidifying and maintaining the pH of intracellular compartments. The protein is V-type proton ATPase catalytic subunit A (VMA1) of Eremothecium gossypii (strain ATCC 10895 / CBS 109.51 / FGSC 9923 / NRRL Y-1056) (Yeast).